Consider the following 305-residue polypeptide: Phosphopantetheine adenylyltransferase (305 aa).

It belongs to the eukaryotic CoaD family.

The protein localises to the cytoplasm. Its subcellular location is the nucleus. The enzyme catalyses (R)-4'-phosphopantetheine + ATP + H(+) = 3'-dephospho-CoA + diphosphate. Reversibly transfers an adenylyl group from ATP to 4'-phosphopantetheine, yielding dephospho-CoA (dPCoA) and pyrophosphate. Plays a role in the physiological regulation of the intracellular CoA concentration. In Saccharomyces cerevisiae (strain ATCC 204508 / S288c) (Baker's yeast), this protein is Phosphopantetheine adenylyltransferase (CAB4).